Consider the following 439-residue polypeptide: Aspartate--tRNA(Asp/Asn) ligase (439 aa).

Glutamate 177 contacts L-aspartate. The tract at residues 199 to 202 (QLYK) is aspartate. Position 221 (arginine 221) interacts with L-aspartate. ATP-binding positions include 221 to 223 (RAE), 229 to 231 (RHL), and glutamate 362. Residues glutamate 362 and serine 365 each contribute to the Mg(2+) site. Residues serine 365 and arginine 369 each coordinate L-aspartate. 410–413 (GADR) serves as a coordination point for ATP.

Belongs to the class-II aminoacyl-tRNA synthetase family. Type 2 subfamily. Homodimer. Mg(2+) serves as cofactor.

The protein resides in the cytoplasm. The catalysed reaction is tRNA(Asx) + L-aspartate + ATP = L-aspartyl-tRNA(Asx) + AMP + diphosphate. Aspartyl-tRNA synthetase with relaxed tRNA specificity since it is able to aspartylate not only its cognate tRNA(Asp) but also tRNA(Asn). Reaction proceeds in two steps: L-aspartate is first activated by ATP to form Asp-AMP and then transferred to the acceptor end of tRNA(Asp/Asn). The polypeptide is Aspartate--tRNA(Asp/Asn) ligase (Methanosphaera stadtmanae (strain ATCC 43021 / DSM 3091 / JCM 11832 / MCB-3)).